The primary structure comprises 904 residues: Protein translocase subunit SecA (904 aa).

ATP-binding positions include Q89, 107 to 111 (GEGKT), and D496. The disordered stretch occupies residues 870-904 (GGFQELSSGTPSPTVTVTTSSGGGTERKTSRRRKR). The segment covering 876 to 889 (SSGTPSPTVTVTTS) has biased composition (low complexity).

The protein belongs to the SecA family. Monomer and homodimer. Part of the essential Sec protein translocation apparatus which comprises SecA, SecYEG and auxiliary proteins SecDF. Other proteins may also be involved.

The protein resides in the cell inner membrane. It is found in the cytoplasm. It carries out the reaction ATP + H2O + cellular proteinSide 1 = ADP + phosphate + cellular proteinSide 2.. In terms of biological role, part of the Sec protein translocase complex. Interacts with the SecYEG preprotein conducting channel. Has a central role in coupling the hydrolysis of ATP to the transfer of proteins into and across the cell membrane, serving as an ATP-driven molecular motor driving the stepwise translocation of polypeptide chains across the membrane. In Leptospira borgpetersenii serovar Hardjo-bovis (strain JB197), this protein is Protein translocase subunit SecA.